Here is a 349-residue protein sequence, read N- to C-terminus: Terpene cyclase janA (349 aa).

An N-linked (GlcNAc...) asparagine glycan is attached at Asn-80. Helical transmembrane passes span Leu-81–Leu-101, Leu-116–Ile-136, Ile-155–Leu-175, Leu-189–Tyr-209, Ile-223–Ala-243, and Val-308–Leu-328.

The protein belongs to the membrane-bound ascI terpene cyclase family.

It localises to the membrane. It functions in the pathway secondary metabolite biosynthesis. Part of the gene cluster that mediates the biosynthesis of the indole diterpenes janthitremanes such as shearinine K or shearinine A. The geranylgeranyl diphosphate (GGPP) synthase janG catalyzes the first step in janthitremane biosynthesis via conversion of farnesyl pyrophosphate and isopentyl pyrophosphate into geranylgeranyl pyrophosphate (GGPP). Condensation of indole-3-glycerol phosphate with GGPP by the prenyl transferase janC then forms 3-geranylgeranylindole (3-GGI). Epoxidation by the FAD-dependent monooxygenase janM leads to a epoxidized-GGI that is substrate of the terpene cyclase janB for cyclization to yield paspaline. Paspaline is subsequently converted to 13-desoxypaspaline by the cytochrome P450 monooxygenase janP, via beta-PC-M6 in a series of alpha-face oxidations. The cytochrome P450 monooxygenase janQ is proposed to carry out sequential beta-face oxidation steps at C-7 and C-13 of 13-desoxypaspaline to form paspalicine and paspalinine respectively. The indole diterpene prenyltransferase janD may then convert paspalinine into shearinine K which is substrate of janO and/or additional enzymes for oxidation and cyclization to generate shearinine A. The sequence is that of Terpene cyclase janA from Penicillium janthinellum (Penicillium vitale).